Reading from the N-terminus, the 293-residue chain is Neugrin (293 aa).

An N-terminal signal peptide occupies residues 1 to 18 (MALSLSLFLGGRVRTSLA). S41 carries the phosphoserine modification. Disordered regions lie at residues 177–210 (DEVSSKSQNHSTALKVAKSHPHSTDAQKKREGRD) and 224–254 (TTALGHQRELQKSATSDSEATGRAGSDTLPS). Residue N185 is glycosylated (N-linked (GlcNAc...) asparagine). The segment covering 198 to 210 (HSTDAQKKREGRD) has biased composition (basic and acidic residues).

It belongs to the neugrin family. As to quaternary structure, forms a regulatory protein-RNA complex, consisting of RCC1L, NGRN, RPUSD3, RPUSD4, TRUB2, FASTKD2 and 16S mt-rRNA. Interacts with 16S mt-rRNA; this interaction is direct. Expressed in heart, brain, liver and kidney. In brain, mainly expressed in neurons rather than glial cells.

It is found in the nucleus. The protein localises to the secreted. It localises to the mitochondrion membrane. Its function is as follows. Plays an essential role in mitochondrial ribosome biogenesis. As a component of a functional protein-RNA module, consisting of RCC1L, NGRN, RPUSD3, RPUSD4, TRUB2, FASTKD2 and 16S mitochondrial ribosomal RNA (16S mt-rRNA), controls 16S mt-rRNA abundance and is required for intra-mitochondrial translation of core subunits of the oxidative phosphorylation system. This Mus musculus (Mouse) protein is Neugrin (Ngrn).